We begin with the raw amino-acid sequence, 785 residues long: Cadherin-7 (785 aa).

The N-terminal stretch at 1–27 (MKLGKVEFCHLLQIIALFLCLSGMNQA) is a signal peptide. The propeptide occupies 28-47 (EPSRSRSKPYFQSGRTRTKR). Over 48–607 (SWVWNQFFVL…AYILPAGLST (560 aa)) the chain is Extracellular. Cadherin domains lie at 49 to 153 (WVWN…EPKF), 154 to 262 (LDGP…PPRF), 263 to 377 (PRRS…PPVF), 378 to 482 (TSRL…APEF), and 482 to 599 (FAME…AEAY). N-linked (GlcNAc...) asparagine glycosylation is found at asparagine 449 and asparagine 530. The helical transmembrane segment at 608–628 (GALIAILACVLTLLVLVLLIV) threads the bilayer. Residues 629-785 (TMRRRKKEPL…YGSGPDCLYS (157 aa)) lie on the Cytoplasmic side of the membrane.

The protein localises to the cell membrane. Cadherins are calcium-dependent cell adhesion proteins. They preferentially interact with themselves in a homophilic manner in connecting cells; cadherins may thus contribute to the sorting of heterogeneous cell types. This is Cadherin-7 (CDH7) from Gallus gallus (Chicken).